The sequence spans 336 residues: IgLON family member 5 (336 aa).

The signal sequence occupies residues 1 to 30; the sequence is MPPPAPGARLRLLAAAALAGLAVISRGLLS. 3 Ig-like C2-type domains span residues 33–122, 132–213, and 218–307; these read LEFS…QPYT, PARI…VLVT, and PTIT…MRLL. N-linked (GlcNAc...) asparagine glycosylation is found at Asn41, Asn49, Asn67, and Asn137. A disulfide bridge links Cys54 with Cys112. Cystine bridges form between Cys154–Cys195 and Cys238–Cys291. Asn288 is a glycosylation site (N-linked (GlcNAc...) asparagine).

This sequence belongs to the immunoglobulin superfamily. IgLON family.

It localises to the secreted. The sequence is that of IgLON family member 5 (Iglon5) from Mus musculus (Mouse).